A 549-amino-acid chain; its full sequence is DNA polymerase lambda (549 aa).

Residues 17-116 (DPDGMFRGVS…ERLPEHKFAI (100 aa)) enclose the BRCT domain. The segment at 126-197 (KEGGAAGSGV…ASGDSKETIA (72 aa)) is disordered. The segment covering 149 to 175 (PENRKETAGGNRESRDAIAHPNEDSDV) has biased composition (basic and acidic residues). A compositionally biased stretch (polar residues) spans 180 to 197 (STCTSSQSASGDSKETIA). The tract at residues 233–247 (NIYRALGDDRRSFSY) is DNA-binding. His280 is an active-site residue. Positions 315–318 (GPAT) are DNA-binding. Residues Arg356, 387–390 (SYRR), and 396–399 (GDMD) contribute to the dCTP site. The interval 390–399 (RGKSSCGDMD) is involved in primer binding. Residues Asp397, Asp399, and Asp464 each contribute to the Mn(2+) site. The DNA-binding stretch occupies residues 438–479 (IEGTDCGVDTYFGLCTYPGRELRHRIDLKVYPRNRHAFGLLA). Position 487 (Asn487) interacts with dCTP.

It belongs to the DNA polymerase type-X family. As to quaternary structure, interacts with PCNA. The cofactor is Mn(2+). In terms of tissue distribution, expressed in proliferating tissues. Expressed in roots, root apex, young leaves, shoot apical meristem (SAM), flag leaves and panicles.

It localises to the nucleus. The catalysed reaction is DNA(n) + a 2'-deoxyribonucleoside 5'-triphosphate = DNA(n+1) + diphosphate. Its function is as follows. Repair polymerase involved in base excision repair (BER) and responsible for repair of lesions that give rise to abasic (AP) sites in DNA. Has both DNA polymerase and terminal transferase activities. Has a 5'-deoxyribose-5-phosphate lyase (dRP lyase) activity. This chain is DNA polymerase lambda, found in Oryza sativa subsp. japonica (Rice).